The sequence spans 993 residues: MTDTVETIDYSKTLYLPQTDFPMRAGLPEKEPVLVKRWQDMDLYAKLRESAAGRTKYVLHDGPPYANGNIHIGHALNKILKDVITRSFQMRGYDSTYVPGWDCHGLPIEWKIEEQYRAKGKNKDEVPVNEFRKECREFAAHWITVQGGEFQRLGVIGDFKNPYTTMAFHAESRIAGELLKFALSGQLYRGSKPVMWSVVERTALAEAEIEYQDYESDTIWAKFPVANLVVANVVDGQPAELNPDLSDRSLDLLDAHVVIWTTTPWTIPGNRAVSYSPRVAYGLYEVTAAENAFGPEPGEKLIFADALAAESQAKAKITLKRLHHVSAEQLGNLVLSHPFKGLGGGYEFPVPMVAGDHVTDDAGTGFVHTAPGHGREDFDAWMDAAPQLRARGIDTVIPFTVDDAGFFTRDAPGFGPDREGGAARVIDDNGKKGNANQAVIDELIKRNALFARGRLKHSYPHSWRSKKPVIFRNTPQWFVYMDKDLGDGTTLRSRALKAIDDTRFVPAAGQNRIRAMIEERPDWVLSRQRAWGVPIAVFADEDGNVLKDEAVNQRIMDAFEEEGADAWFAAGAKERFLGNHDASKWKQVMDILDVWFDSGSTHVFTLEDRPDLKWPADVYLEGSDQHRGWFHSSLLESCGTRGRAPYDTVVTHGFTMDEDGRKMSKSLGNTVVPQDVIKQSGADILRLWVVTTDYWEDQRLGKNVLQTNIDAYRKLRNTIRWMLGTLAHDDGETVPLEAMPELERLMLHRLAELDEVVRQGYDAFEFKRITRALVDFMVVELSAFYFDIRKDALYCDAPSSVKRKASVQVVRHLFDCLVKWLAPMLPFTMEEAWLDRHPDAVSVHLDQFPEIPADWKNEALAEKWRKVRQVRRVVTGALEIARAQKVIGSSLEAVPVVTINDAALEAAIADVDMAEMAITSDLVIAHGQAPEGAFTLDDVRGVAVVVEKAEDRGLVKCARSWRYTADVGQDPAFPDVSARDAAVLHELKALGRL.

The 'HIGH' region motif lies at 64-74 (PYANGNIHIGH). Glu-621 lines the L-isoleucyl-5'-AMP pocket. The 'KMSKS' region signature appears at 662–666 (KMSKS). Lys-665 serves as a coordination point for ATP.

Belongs to the class-I aminoacyl-tRNA synthetase family. IleS type 1 subfamily. As to quaternary structure, monomer.

It is found in the cytoplasm. The catalysed reaction is tRNA(Ile) + L-isoleucine + ATP = L-isoleucyl-tRNA(Ile) + AMP + diphosphate. Its function is as follows. Catalyzes the attachment of isoleucine to tRNA(Ile). As IleRS can inadvertently accommodate and process structurally similar amino acids such as valine, to avoid such errors it has two additional distinct tRNA(Ile)-dependent editing activities. One activity is designated as 'pretransfer' editing and involves the hydrolysis of activated Val-AMP. The other activity is designated 'posttransfer' editing and involves deacylation of mischarged Val-tRNA(Ile). The sequence is that of Isoleucine--tRNA ligase from Mesorhizobium japonicum (strain LMG 29417 / CECT 9101 / MAFF 303099) (Mesorhizobium loti (strain MAFF 303099)).